Consider the following 149-residue polypeptide: Protegrin-1 (149 aa).

Residues 1 to 29 (METQRASLCLGRWSLWLLLLALVVPSASA) form the signal peptide. Positions 30–130 (QALSYREAVL…DITCNEVQGV (101 aa)) are excised as a propeptide. Residues 61-80 (DQPPKADEDPGTPKPVSFTV) are disordered. 4 disulfide bridges follow: Cys-85–Cys-96, Cys-107–Cys-124, Cys-136–Cys-145, and Cys-138–Cys-143. Arg-148 carries the post-translational modification Arginine amide.

Belongs to the cathelicidin family.

It is found in the secreted. Its function is as follows. Microbicidal activity. Active against E.coli, Listeria monocytogenes and C.albicans, in vitro. The protein is Protegrin-1 (NPG1) of Sus scrofa (Pig).